Here is a 144-residue protein sequence, read N- to C-terminus: uncharacterized protein (144 aa).

The first 16 residues, 1–16, serve as a signal peptide directing secretion; the sequence is MRKFLIVLLLPLLVLA.

This is an uncharacterized protein from Aquifex aeolicus (strain VF5).